A 31-amino-acid polypeptide reads, in one-letter code: Cytochrome b6-f complex subunit 6 (31 aa).

A helical membrane pass occupies residues 4–26 (ITSYFGFLLAASTITSALLIGLS).

Belongs to the PetL family. As to quaternary structure, the 4 large subunits of the cytochrome b6-f complex are cytochrome b6, subunit IV (17 kDa polypeptide, PetD), cytochrome f and the Rieske protein, while the 4 small subunits are PetG, PetL, PetM and PetN. The complex functions as a dimer.

The protein resides in the plastid. Its subcellular location is the chloroplast thylakoid membrane. In terms of biological role, component of the cytochrome b6-f complex, which mediates electron transfer between photosystem II (PSII) and photosystem I (PSI), cyclic electron flow around PSI, and state transitions. PetL is important for photoautotrophic growth as well as for electron transfer efficiency and stability of the cytochrome b6-f complex. This is Cytochrome b6-f complex subunit 6 from Chloranthus spicatus (Chulantree).